We begin with the raw amino-acid sequence, 547 residues long: Tripartite motif-containing protein 5 (547 aa).

Residue Ala-2 is modified to N-acetylalanine. The RING-type zinc finger occupies 15 to 59 (CPICLELLTEPLSLDCGHSFCQACITANHKESTLHQGERSCPLCR). Ser-86 is subject to Phosphoserine. The B box-type zinc-finger motif lies at 91 to 132 (QKVDRCARHGEKLLLFCQQHGNVICWLCERSQEHRGHSTFLV). Residues Cys-96, His-99, Cys-118, and His-124 each coordinate Zn(2+). Residues 132 to 225 (VEEVAQKYQE…AQSENDMVLQ (94 aa)) adopt a coiled-coil conformation. Residues 186–199 (FKQLRDILDCEESN) are required for interaction with GABARAP and for autophagy. Residues 280-547 (PDLKGMLQVF…LPMTLCSPSS (268 aa)) enclose the B30.2/SPRY domain.

This sequence belongs to the TRIM/RBCC family. As to quaternary structure, can form homodimers and homotrimers. In addition to lower-order dimerization, also exhibits a higher-order multimerization and both low- and high-order multimerizations are essential for its restriction activity. Interacts with BTBD1 and BTBD2. Interacts with PSMC4, PSMC5, PSMD7 and HSPA8/HSC70. Interacts (via B30.2/SPRY domain) with HSPA1A/B. Interacts with PSMC2, MAP3K7/TAK1, TAB2 and TAB3. Interacts with SQSTM1. Interacts with TRIM6 and TRIM34. Interacts with ULK1 (phosphorylated form), GABARAP, GABARAPL1, GABARAPL2, MAP1LC3A, MAP1LC3C and BECN1. Degraded in a proteasome-independent fashion in the absence of viral infection but in a proteasome-dependent fashion following exposure to restriction sensitive virus. Post-translationally, autoubiquitinated in a RING finger- and UBE2D2-dependent manner. Monoubiquitinated by TRIM21. Deubiquitinated by Yersinia YopJ. Ubiquitination may not lead to proteasomal degradation.

It localises to the cytoplasm. The protein resides in the nucleus. The catalysed reaction is S-ubiquitinyl-[E2 ubiquitin-conjugating enzyme]-L-cysteine + [acceptor protein]-L-lysine = [E2 ubiquitin-conjugating enzyme]-L-cysteine + N(6)-ubiquitinyl-[acceptor protein]-L-lysine.. It functions in the pathway protein modification; protein ubiquitination. Its function is as follows. Capsid-specific restriction factor that prevents infection from non-host-adapted retroviruses. Blocks viral replication early in the life cycle, after viral entry but before reverse transcription. In addition to acting as a capsid-specific restriction factor, also acts as a pattern recognition receptor that activates innate immune signaling in response to the retroviral capsid lattice. Binding to the viral capsid triggers its E3 ubiquitin ligase activity, and in concert with the heterodimeric ubiquitin conjugating enzyme complex UBE2V1-UBE2N (also known as UBC13-UEV1A complex) generates 'Lys-63'-linked polyubiquitin chains, which in turn are catalysts in the autophosphorylation of the MAP3K7/TAK1 complex (includes TAK1, TAB2, and TAB3). Activation of the MAP3K7/TAK1 complex by autophosphorylation results in the induction and expression of NF-kappa-B and MAPK-responsive inflammatory genes, thereby leading to an innate immune response in the infected cell. Plays a role in regulating autophagy through activation of autophagy regulator BECN1 by causing its dissociation from its inhibitors BCL2 and TAB2. The protein is Tripartite motif-containing protein 5 (TRIM5) of Ateles geoffroyi (Black-handed spider monkey).